A 569-amino-acid chain; its full sequence is 63 kDa chaperonin, mitochondrial (569 aa).

The transit peptide at 1 to 29 (MFKMYRSPHITRNSFKYLKATNINSCRFY) directs the protein to the mitochondrion.

It belongs to the chaperonin (HSP60) family. Forms a single seven-member ring complex, in tight association with the p60 protein. In terms of tissue distribution, testis.

It is found in the mitochondrion. Implicated in mitochondrial protein import and macromolecular assembly. May facilitate the correct folding of imported proteins. May also prevent misfolding and promote the refolding and proper assembly of unfolded polypeptides generated under stress conditions in the mitochondrial matrix. This is 63 kDa chaperonin, mitochondrial from Heliothis virescens (Tobacco budworm moth).